An 800-amino-acid polypeptide reads, in one-letter code: MLISNEWLKEYVTIDDSVSNLAERITRTGIEVDDLIDYTKDIKNLVVGFVKSKDKHPDADKLNVCQVDIGEDEPVQIVCGAPNVDAGQYVIVAKVGGRLPGGIKIKRAKLRGERSEGMICSLQEIGISSNYIPKSFESGIYVFSESQVPGTDALQALYLDDQVMEFDLTPNRADALSMIGTAYEVAALYNTKMTKPDTTSNELELSANDELTVTIENEDKVPYYSARVVHDVTIEPSPIWMQARLIKAGIRPINNVVDISNYVLLEYGQPLHMFDQDAIGSQQIVVRQANEGEKMTTLDDTERELLTSDIVITNGQTPIALAGVMGGDFSEVKEQTSNIVIEGAIFDPVSIRHTSRRLNLRSESSSRFEKGIATEFVDEAVDRACYLLQTYANGKVLKDRVSSGELGAFITPIDITADKINRTIGFDLSQNDIVTIFNQLGFDTEINDDVITVLVPSRRKDITIKEDLIEEVARIYGYDDIPSTLPVFDKVTSGQLTDRQYKTRMVKEVLEGAGLDQAITYSLVSKEDATAFSMQQRQTIDLLMPMSEAHASLRQSLLPHLIEAASYNVARKNKDVKLFEIGNVFFANGEGELPDQVEYLSGILTGDYVVNQWQGKKETVDFYLAKGVVDRVSEKLNLEFSYRRADIDGLHPGRTAEILLENKVVGFIGELHPTLAADNDLKRTYVFELNFDALMSVSVGYINYQPIPRFPGMSRDIALEVDQNIPAADLLSTIHAHGGNILKDTLVFDVYQGEHLEKGKKSIAIRLNYLDTEETLTDERVSKVQAEIEAALIEQGAVIR.

The tRNA-binding domain maps to 39–154 (TKDIKNLVVG…ESQVPGTDAL (116 aa)). Residues 408 to 483 (AFITPIDITA…RIYGYDDIPS (76 aa)) form the B5 domain. Residues aspartate 461, aspartate 467, glutamate 470, and glutamate 471 each contribute to the Mg(2+) site. The FDX-ACB domain occupies 708 to 800 (PRFPGMSRDI…ALIEQGAVIR (93 aa)).

Belongs to the phenylalanyl-tRNA synthetase beta subunit family. Type 1 subfamily. In terms of assembly, tetramer of two alpha and two beta subunits. The cofactor is Mg(2+).

It is found in the cytoplasm. It carries out the reaction tRNA(Phe) + L-phenylalanine + ATP = L-phenylalanyl-tRNA(Phe) + AMP + diphosphate + H(+). The sequence is that of Phenylalanine--tRNA ligase beta subunit from Staphylococcus aureus (strain MSSA476).